The primary structure comprises 119 residues: uncharacterized protein (119 aa).

It is found in the mitochondrion. This is an uncharacterized protein from Arabidopsis thaliana (Mouse-ear cress).